Reading from the N-terminus, the 126-residue chain is uncharacterized protein (126 aa).

The tract at residues 13 to 45 (VAPKAGREEEQPPPPAGLGCGARGEPGRGPLEH) is disordered.

The protein resides in the cytoplasm. Its subcellular location is the cytoskeleton. It localises to the cilium basal body. This is an uncharacterized protein from Homo sapiens (Human).